An 89-amino-acid chain; its full sequence is Small ribosomal subunit protein uS15 (89 aa).

Belongs to the universal ribosomal protein uS15 family. In terms of assembly, part of the 30S ribosomal subunit. Forms a bridge to the 50S subunit in the 70S ribosome, contacting the 23S rRNA.

Functionally, one of the primary rRNA binding proteins, it binds directly to 16S rRNA where it helps nucleate assembly of the platform of the 30S subunit by binding and bridging several RNA helices of the 16S rRNA. Its function is as follows. Forms an intersubunit bridge (bridge B4) with the 23S rRNA of the 50S subunit in the ribosome. The sequence is that of Small ribosomal subunit protein uS15 from Pseudomonas aeruginosa (strain LESB58).